Reading from the N-terminus, the 480-residue chain is Cysteine--tRNA ligase (480 aa).

Residue Cys31 coordinates Zn(2+). The short motif at 33-43 is the 'HIGH' region element; the sequence is PTVYDSSHIGH. Zn(2+) contacts are provided by Cys211, His236, and Glu240. The short motif at 269–273 is the 'KMSKS' region element; it reads KMSKS. Lys272 provides a ligand contact to ATP.

This sequence belongs to the class-I aminoacyl-tRNA synthetase family. Zn(2+) serves as cofactor.

It carries out the reaction tRNA(Cys) + L-cysteine + ATP = L-cysteinyl-tRNA(Cys) + AMP + diphosphate. The chain is Cysteine--tRNA ligase from Encephalitozoon cuniculi (strain GB-M1) (Microsporidian parasite).